A 347-amino-acid chain; its full sequence is Quinolinate synthase (347 aa).

2 residues coordinate iminosuccinate: H47 and S68. Residue C113 coordinates [4Fe-4S] cluster. Iminosuccinate is bound by residues 139–141 and S156; that span reads YAN. C200 contributes to the [4Fe-4S] cluster binding site. Iminosuccinate is bound by residues 226–228 and T243; that span reads HPE. C297 contacts [4Fe-4S] cluster.

The protein belongs to the quinolinate synthase family. Type 1 subfamily. Requires [4Fe-4S] cluster as cofactor.

The protein localises to the cytoplasm. It catalyses the reaction iminosuccinate + dihydroxyacetone phosphate = quinolinate + phosphate + 2 H2O + H(+). It functions in the pathway cofactor biosynthesis; NAD(+) biosynthesis; quinolinate from iminoaspartate: step 1/1. Functionally, catalyzes the condensation of iminoaspartate with dihydroxyacetone phosphate to form quinolinate. The polypeptide is Quinolinate synthase (Salmonella paratyphi A (strain ATCC 9150 / SARB42)).